The sequence spans 1247 residues: Catenin delta-2 (1247 aa).

Disordered regions lie at residues 1-50 (MFAR…TTSA), 134-238 (SGIL…SAFH), and 256-309 (LPAP…KSYS). S7 carries the post-translational modification Phosphoserine. Residues 22-50 (PSASEKNSSLSPGLNTSNGDGSETETTSA) show a composition bias toward polar residues. A coiled-coil region spans residues 49–84 (SAILASVKEQELQFERLTRELEAERQIVASQLERCK). A compositionally biased stretch (low complexity) spans 149–160 (SLLSQSALQLNS). Over residues 172–207 (YHSNQTLALGDTAPSQLPARSTQARAAGQSFSQGTT) the composition is skewed to polar residues. R209 is subject to Omega-N-methylarginine. Residues 218–228 (PAPPPPPPREP) show a composition bias toward pro residues. R261 is modified (omega-N-methylarginine). A phosphoserine mark is found at S264 and S273. Over residues 265–276 (PLTTTQGGSPTK) the composition is skewed to polar residues. Omega-N-methylarginine is present on residues R279 and R293. The span at 296 to 309 (SPKQSPSRLAKSYS) shows a compositional bias: polar residues. Residues S324, S357, S412, and S458 each carry the phosphoserine modification. One copy of the ARM 1 repeat lies at 391 to 433 (GSRASYSSQHGHLAPELRALQSPEHHIDPIYEDRVYQKPPMRS). Residues 429–480 (PPMRSLSQSQGDPLPPAHTGTFRTSTAPSSPGVDSVPLQRTGSQHGPQNAAA) form a disordered region. A compositionally biased stretch (polar residues) spans 466 to 475 (LQRTGSQHGP). The residue at position 511 (S511) is a Phosphoserine. A Phosphotyrosine modification is found at Y513. A disordered region spans residues 514–533 (SKSGPALPPEGTLARSPSID). ARM repeat units lie at residues 537-576 (KDPR…HLCF), 579-618 (NKIK…NLVY), 623-663 (DDNK…NLSS), 679-721 (LTNA…NVSS), 725-770 (EARR…NLSY), 832-872 (PKGI…NLAA), 904-943 (VYIR…NMAL), and 997-1040 (MENA…SMWQ). Disordered stretches follow at residues 1064-1131 (TIER…HTSR) and 1152-1176 (APAE…RKDY). Positions 1072 to 1081 (PYSSSRTPSI) are enriched in polar residues. Residues S1087 and S1098 each carry the phosphoserine modification. Residues 1087 to 1100 (SPNNRSASAPASPR) show a composition bias toward low complexity. Over residues 1103-1112 (ISLKERKTDY) the composition is skewed to basic and acidic residues.

This sequence belongs to the beta-catenin family. As to quaternary structure, binds to E-cadherin at a juxtamembrane site within the cytoplasmic domain. Binds to PSEN1. Interacts with PDZD2. Interacts (via the extreme C-terminus) with FRMPD2 (via the PDZ 2 domain). Interacts with ZBTB33. Interacts with ARHGEF28. Interacts with CDK5. Interacts with CTNNB1. Interacts with GSK3A and GSK3B. Interacts with DNM2. Interacts with CCDC85B. In terms of processing, O-glycosylated. Post-translationally, phosphorylated by CDK5. Phosphorylated by GSK3B. In terms of tissue distribution, expressed in neurons and glial cells. Isoform 2 was found to be the most predominant isoform in various brain regions. Expressed at neuromuscular junctions.

It localises to the nucleus. It is found in the cell junction. The protein resides in the adherens junction. Its subcellular location is the cell projection. The protein localises to the dendrite. It localises to the perikaryon. Has a critical role in neuronal development, particularly in the formation and/or maintenance of dendritic spines and synapses. Involved in the regulation of canonical Wnt signaling. It probably acts on beta-catenin turnover, facilitating beta-catenin interaction with GSK3B, phosphorylation, ubiquitination and degradation. May be involved in neuronal cell adhesion and tissue morphogenesis and integrity by regulating adhesion molecules. Functions as a transcriptional activator when bound to ZBTB33. This chain is Catenin delta-2 (Ctnnd2), found in Mus musculus (Mouse).